Reading from the N-terminus, the 501-residue chain is Trans-cinnamate 4-monooxygenase (501 aa).

A helical transmembrane segment spans residues L3 to V23. (E)-cinnamate is bound by residues R213–Q218 and A302. C443 serves as a coordination point for heme.

This sequence belongs to the cytochrome P450 family. Requires heme as cofactor.

It localises to the membrane. The catalysed reaction is (E)-cinnamate + reduced [NADPH--hemoprotein reductase] + O2 = (E)-4-coumarate + oxidized [NADPH--hemoprotein reductase] + H2O + H(+). It functions in the pathway phenylpropanoid metabolism; trans-4-coumarate biosynthesis; trans-4-coumarate from trans-cinnamate: step 1/1. Catalyzes the first oxidative step of the phenylpropanoid pathway in higher plants by transforming trans-cinnamate into p-coumarate. The compounds formed by this pathway are essential components for lignification, pollination, and defense against ultraviolet light, predators and pathogens. Can also use 2-naphthoic acid as substrate. This chain is Trans-cinnamate 4-monooxygenase, found in Sorghum bicolor (Sorghum).